Consider the following 380-residue polypeptide: Queuine tRNA-ribosyltransferase (380 aa).

Asp-96 acts as the Proton acceptor in catalysis. Substrate-binding positions include 96 to 100 (DSGGF), Asp-150, Gln-193, and Gly-220. Positions 251–257 (GVGAPDS) are RNA binding. Residue Asp-270 is the Nucleophile of the active site. The interval 275–279 (TRIAR) is RNA binding; important for wobble base 34 recognition. Residues Cys-308, Cys-310, Cys-313, and His-339 each contribute to the Zn(2+) site.

This sequence belongs to the queuine tRNA-ribosyltransferase family. In terms of assembly, homodimer. Within each dimer, one monomer is responsible for RNA recognition and catalysis, while the other monomer binds to the replacement base PreQ1. Zn(2+) serves as cofactor.

The catalysed reaction is 7-aminomethyl-7-carbaguanine + guanosine(34) in tRNA = 7-aminomethyl-7-carbaguanosine(34) in tRNA + guanine. Its pathway is tRNA modification; tRNA-queuosine biosynthesis. In terms of biological role, catalyzes the base-exchange of a guanine (G) residue with the queuine precursor 7-aminomethyl-7-deazaguanine (PreQ1) at position 34 (anticodon wobble position) in tRNAs with GU(N) anticodons (tRNA-Asp, -Asn, -His and -Tyr). Catalysis occurs through a double-displacement mechanism. The nucleophile active site attacks the C1' of nucleotide 34 to detach the guanine base from the RNA, forming a covalent enzyme-RNA intermediate. The proton acceptor active site deprotonates the incoming PreQ1, allowing a nucleophilic attack on the C1' of the ribose to form the product. After dissociation, two additional enzymatic reactions on the tRNA convert PreQ1 to queuine (Q), resulting in the hypermodified nucleoside queuosine (7-(((4,5-cis-dihydroxy-2-cyclopenten-1-yl)amino)methyl)-7-deazaguanosine). The sequence is that of Queuine tRNA-ribosyltransferase from Streptococcus thermophilus (strain ATCC BAA-250 / LMG 18311).